We begin with the raw amino-acid sequence, 182 residues long: Adenylate kinase (182 aa).

12–17 lines the ATP pocket; sequence GAGKGT. Residues 32–61 form an NMP region; sequence STGELLRKEIEMNTNLGIQVKDIMNRGELV. AMP is bound by residues Thr-33, Arg-38, 59–61, 85–88, and Gln-92; these read ELV and GYPR. The interval 126–132 is LID; sequence LRGRKDD. Residue Arg-127 participates in ATP binding. 2 residues coordinate AMP: Arg-129 and Arg-140. An ATP-binding site is contributed by Arg-168.

It belongs to the adenylate kinase family. As to quaternary structure, monomer.

It is found in the cytoplasm. It carries out the reaction AMP + ATP = 2 ADP. Its pathway is purine metabolism; AMP biosynthesis via salvage pathway; AMP from ADP: step 1/1. In terms of biological role, catalyzes the reversible transfer of the terminal phosphate group between ATP and AMP. Plays an important role in cellular energy homeostasis and in adenine nucleotide metabolism. In Prochlorococcus marinus (strain AS9601), this protein is Adenylate kinase.